We begin with the raw amino-acid sequence, 830 residues long: Periplasmic nitrate reductase (830 aa).

The tat-type signal signal peptide spans 1-32; sequence MELNRRDFMKANAAVAAAAAAGITIPVKNVHA. Residues 39–95 enclose the 4Fe-4S Mo/W bis-MGD-type domain; it reads IRWDKAPCRYCGTGCSVLVGTKDGRVVATQGDPDAEVNRGLNCIKGYFLSKIMYGAD. [4Fe-4S] cluster is bound by residues cysteine 46, cysteine 49, cysteine 53, and cysteine 81. Mo-bis(molybdopterin guanine dinucleotide) is bound by residues lysine 83, glutamine 151, asparagine 176, cysteine 180, 213–220, 244–248, methionine 374, glutamine 378, asparagine 484, 510–511, lysine 533, aspartate 560, and 720–729; these read WGSNMAEM, STFEH, SD, and TGRVLEHWHT. Residue phenylalanine 796 coordinates substrate. Mo-bis(molybdopterin guanine dinucleotide) contacts are provided by asparagine 804 and lysine 821.

This sequence belongs to the prokaryotic molybdopterin-containing oxidoreductase family. NasA/NapA/NarB subfamily. As to quaternary structure, component of the periplasmic nitrate reductase NapAB complex composed of NapA and NapB. It depends on [4Fe-4S] cluster as a cofactor. Requires Mo-bis(molybdopterin guanine dinucleotide) as cofactor. Post-translationally, predicted to be exported by the Tat system. The position of the signal peptide cleavage has not been experimentally proven.

The protein localises to the periplasm. It catalyses the reaction 2 Fe(II)-[cytochrome] + nitrate + 2 H(+) = 2 Fe(III)-[cytochrome] + nitrite + H2O. Functionally, catalytic subunit of the periplasmic nitrate reductase complex NapAB. Receives electrons from NapB and catalyzes the reduction of nitrate to nitrite. The polypeptide is Periplasmic nitrate reductase (Mannheimia succiniciproducens (strain KCTC 0769BP / MBEL55E)).